Consider the following 203-residue polypeptide: Thymidylate kinase (203 aa).

7–14 (GGEGAGKT) contributes to the ATP binding site.

This sequence belongs to the thymidylate kinase family.

It catalyses the reaction dTMP + ATP = dTDP + ADP. Functionally, phosphorylation of dTMP to form dTDP in both de novo and salvage pathways of dTTP synthesis. This Chlamydia trachomatis serovar D (strain ATCC VR-885 / DSM 19411 / UW-3/Cx) protein is Thymidylate kinase (tmk).